The following is a 562-amino-acid chain: NAD-dependent malic enzyme (562 aa).

Tyrosine 101 acts as the Proton donor in catalysis. An NAD(+)-binding site is contributed by arginine 154. Lysine 172 serves as the catalytic Proton acceptor. 3 residues coordinate a divalent metal cation: glutamate 243, aspartate 244, and aspartate 267. Residues aspartate 267 and asparagine 415 each coordinate NAD(+).

Belongs to the malic enzymes family. In terms of assembly, homotetramer. Mg(2+) serves as cofactor. Mn(2+) is required as a cofactor.

The catalysed reaction is (S)-malate + NAD(+) = pyruvate + CO2 + NADH. It catalyses the reaction oxaloacetate + H(+) = pyruvate + CO2. This Shewanella sediminis (strain HAW-EB3) protein is NAD-dependent malic enzyme.